A 1883-amino-acid polypeptide reads, in one-letter code: DDB1- and CUL4-associated factor homolog 1 (1883 aa).

Disordered stretches follow at residues methionine 1–glutamate 47 and lysine 309–alanine 340. Residues asparagine 37 to glutamate 47 show a composition bias toward acidic residues. Over residues lysine 309–arginine 322 the composition is skewed to basic and acidic residues. Over residues histidine 323 to glycine 334 the composition is skewed to basic residues. A Phosphoserine modification is found at serine 349. Positions asparagine 882 to serine 924 are disordered. Residues glutamine 888 to glutamine 917 are compositionally biased toward polar residues. The LisH domain occupies aspartate 1087 to proline 1119. Disordered regions lie at residues threonine 1157–serine 1202, proline 1214–glutamine 1260, and serine 1310–arginine 1377. Low complexity predominate over residues leucine 1238 to glutamine 1251. Positions serine 1310–asparagine 1329 are enriched in basic and acidic residues. Over residues serine 1330 to serine 1362 the composition is skewed to polar residues. 5 WD repeats span residues aspartate 1464–serine 1503, glycine 1506–arginine 1546, serine 1548–proline 1586, cysteine 1587–proline 1626, and aspartate 1633–leucine 1671. 2 short sequence motifs (DWD box) span residues valine 1619–proline 1626 and glutamate 1655–phenylalanine 1662. The tract at residues tyrosine 1763–serine 1883 is disordered. Acidic residues-rich tracts occupy residues aspartate 1773 to leucine 1796 and aspartate 1808 to methionine 1864.

The protein belongs to the VPRBP/DCAF1 family. In terms of assembly, component of the CUL4-RBX1-DDB1-DCAF1 E3 ubiquitin-protein ligase complex. Interacts with DDB1A through its DWD motifs. In terms of tissue distribution, ubiquitous but predominantly expressed in the inflorescence and roots.

It is found in the nucleus. It participates in protein modification; protein ubiquitination. Functionally, component of the CUL4-RBX1-DDB1-DCAF1 E3 ubiquitin-protein ligase complex, DCAF1 may function as the substrate recognition module within this complex. Appears to be required for plant embryogenesis and to affect several other developmental processes including leaf, shoot, and flower development. The protein is DDB1- and CUL4-associated factor homolog 1 (DCAF1) of Arabidopsis thaliana (Mouse-ear cress).